The primary structure comprises 1659 residues: eIF-2-alpha kinase GCN2 (1659 aa).

The RWD domain maps to asparagine 17–phenylalanine 128. The disordered stretch occupies residues lysine 149–glutamate 170. Protein kinase domains are found at residues leucine 256 to leucine 527 and phenylalanine 599 to leucine 981. ATP is bound by residues leucine 605–valine 613 and lysine 628. Disordered regions lie at residues asparagine 671–glutamate 691 and phenylalanine 727–arginine 768. Serine 761 is modified (phosphoserine). Aspartate 835 (proton acceptor) is an active-site residue. Threonine 882 and threonine 887 each carry phosphothreonine; by autocatalysis. Residues asparagine 999–serine 1519 are histidyl-tRNA synthetase-like.

The protein belongs to the protein kinase superfamily. Ser/Thr protein kinase family. GCN2 subfamily. In terms of assembly, homodimer; homodimerization is important for kinase activation by uncharged tRNAs. Interacts (via N-terminal RWD domain) with GCN1 (via N- and C-terminus); this interaction stimulates GCN2 kinase activity in a GCN20-dependent manner in response to amino acid starvation. Interacts (via N-terminus) with the GCN1-GCN20 complex on translating ribosomes in amino acid-starved cells; GCN1 may bind near the ribosomal A-site and promotes the transfer of uncharged tRNAs from the A-site to the tRNA-binding domain in GCN2 for its subsequent kinase activation, and hence allowing GCN4 translational activation and derepression of amino acid biosynthetic genes. Interacts (via C-terminus) with TIF11; this interaction is direct, occurs in amino acid-repleted cells, may be stabilized in a ribosome-dependent manner, reduces GCN2-mediated eIF-2-alpha phosphorylation but not GCN2 autophosphorylation and is lost in amino acid-starved cells and by uncharged tRNAs. Associates (via C-terminus) with ribosomes. The cofactor is Mg(2+). Post-translationally, autophosphorylated, autophosphorylation on Thr-882 and Thr-887 increases kinase activity.

It is found in the cytoplasm. The enzyme catalyses L-seryl-[protein] + ATP = O-phospho-L-seryl-[protein] + ADP + H(+). The catalysed reaction is L-threonyl-[protein] + ATP = O-phospho-L-threonyl-[protein] + ADP + H(+). With respect to regulation, the integrated stress response (ISR) is activated in response to conditions that promote ribosome collisions: GCN1, which acts as a ribosome collision sensor, activates GCN2. The RQC pathway and the integrated stress response (ISR) antagonize each other: HEL2 prevents the activation of GCN2, while GCN2 suppresses RQC activation. Ribosome stalling-induced integrated stress response prefers ribosomes with empty A sites. The kinase activity is stimulated upon binding to uncharged tRNAs. Functionally, metabolic-stress sensing protein kinase that phosphorylates the alpha subunit of eukaryotic translation initiation factor 2 (eIF-2-alpha/SUI2) on 'Ser-52' in response to low amino acid, carbon, or purine availability. Required for adapatation to nutrient starvation by acting as a key component of the integrated stress response (ISR), by which cells alter their translational and transcriptional output in response to starvation. Converts phosphorylated eIF-2-alpha/SUI2 either to a competitive inhibitor of translation initiation factor eIF-2B, leading to a global protein synthesis repression, and thus to a reduced overall utilization of amino acids, or to a translational initiation activation of specific mRNAs, such as the transcriptional activator GCN4, and hence allowing GCN4-mediated reprogramming of transcription to alleviate nutrient depletion. Binds uncharged tRNAs. Binds to aminoacylated tRNA(Phe) less tightly than to deacylated tRNA(Phe). Binds to double-stranded RNA. The polypeptide is eIF-2-alpha kinase GCN2 (Saccharomyces cerevisiae (strain ATCC 204508 / S288c) (Baker's yeast)).